The primary structure comprises 45 residues: uncharacterized protein (45 aa).

Positions 18–45 (RRGRIGVQPSPERRSEVVGPFPLARSLS) are disordered.

This is an uncharacterized protein from Homo sapiens (Human).